We begin with the raw amino-acid sequence, 379 residues long: L-demethylnoviosyl transferase (379 aa).

The protein belongs to the glycosyltransferase 28 family.

The catalysed reaction is dTDP-4-O-demethyl-beta-L-noviose + novobiocic acid = desmethyldescarbamoylnovobiocin + dTDP + H(+). Its pathway is antibiotic biosynthesis; novobiocin biosynthesis. Its activity is regulated as follows. Inhibited by TDP-L-rhamnose, the sugar donor that most closely structurally resembles the natural substrate dTDP-beta-L-noviose. Its function is as follows. Catalyzes the transfer of L-noviose from dTDP-4-O-demethyl-beta-L-noviose to the phenolic oxygen of novobiocic acid, creating the full ABC ring system in the novobiocin biosynthesis pathway. Novobiocin is an aminocoumarin family antibiotic that targets bacterial DNA gyrases. Also shows activity with variant coumarin aglycones, suggesting it may be a promiscuous catalyst for noviosylation of a range of planar scaffolds. Does not show activity with TDP-L-rhamnose. This Streptomyces niveus (Streptomyces spheroides) protein is L-demethylnoviosyl transferase (novM).